The sequence spans 488 residues: Glutamyl-tRNA(Gln) amidotransferase subunit A (488 aa).

Catalysis depends on charge relay system residues K77 and S152. S176 acts as the Acyl-ester intermediate in catalysis.

It belongs to the amidase family. GatA subfamily. Heterotrimer of A, B and C subunits.

It carries out the reaction L-glutamyl-tRNA(Gln) + L-glutamine + ATP + H2O = L-glutaminyl-tRNA(Gln) + L-glutamate + ADP + phosphate + H(+). Allows the formation of correctly charged Gln-tRNA(Gln) through the transamidation of misacylated Glu-tRNA(Gln) in organisms which lack glutaminyl-tRNA synthetase. The reaction takes place in the presence of glutamine and ATP through an activated gamma-phospho-Glu-tRNA(Gln). This is Glutamyl-tRNA(Gln) amidotransferase subunit A from Streptococcus thermophilus (strain CNRZ 1066).